A 713-amino-acid chain; its full sequence is Calpastatin (713 aa).

Disordered regions lie at residues M1–M187 and D211–P506. Positions P21 to A30 are enriched in basic residues. Residue K32 forms a Glycyl lysine isopeptide (Lys-Gly) (interchain with G-Cter in SUMO2) linkage. The span at V46 to P63 shows a compositional bias: basic and acidic residues. K50 is subject to N6-acetyllysine. A compositionally biased stretch (polar residues) spans S85–E94. Phosphoserine occurs at positions 87 and 134. A Phosphothreonine modification is found at T136. The Inhibitory domain 1 repeat unit spans residues T171–T223. S244 carries the phosphoserine modification. Basic and acidic residues-rich tracts occupy residues D248–T258, R304–G332, and Y342–S367. An Inhibitory domain 2 repeat occupies E307 to A359. Phosphoserine is present on residues S367, S369, and S376. Positions E370 to F379 are enriched in acidic residues. Over residues D380–E397 the composition is skewed to basic and acidic residues. A Phosphoserine modification is found at S441. Basic and acidic residues predominate over residues G443–E502. The Inhibitory domain 3 repeat unit spans residues A447 to P500. Phosphoserine occurs at positions 517 and 528. Residues S536 to S713 form a disordered region. Residues V542–S553 show a composition bias toward polar residues. S575 and S577 each carry phosphoserine. An Inhibitory domain 4 repeat occupies P583–K636. Basic and acidic residues-rich tracts occupy residues P583–A646 and K691–S713.

It belongs to the protease inhibitor I27 (calpastatin) family.

Its function is as follows. Specific inhibition of calpain (calcium-dependent cysteine protease). Plays a key role in postmortem tenderization of meat and have been proposed to be involved in muscle protein degradation in living tissue. The protein is Calpastatin (CAST) of Sus scrofa (Pig).